The sequence spans 203 residues: 3-isopropylmalate dehydratase small subunit (203 aa).

This sequence belongs to the LeuD family. LeuD type 1 subfamily. Heterodimer of LeuC and LeuD.

It catalyses the reaction (2R,3S)-3-isopropylmalate = (2S)-2-isopropylmalate. Its pathway is amino-acid biosynthesis; L-leucine biosynthesis; L-leucine from 3-methyl-2-oxobutanoate: step 2/4. Its function is as follows. Catalyzes the isomerization between 2-isopropylmalate and 3-isopropylmalate, via the formation of 2-isopropylmaleate. This Phenylobacterium zucineum (strain HLK1) protein is 3-isopropylmalate dehydratase small subunit.